The chain runs to 94 residues: Phosphoribosyl-ATP pyrophosphatase (94 aa).

This sequence belongs to the PRA-PH family.

Its subcellular location is the cytoplasm. The enzyme catalyses 1-(5-phospho-beta-D-ribosyl)-ATP + H2O = 1-(5-phospho-beta-D-ribosyl)-5'-AMP + diphosphate + H(+). It participates in amino-acid biosynthesis; L-histidine biosynthesis; L-histidine from 5-phospho-alpha-D-ribose 1-diphosphate: step 2/9. The protein is Phosphoribosyl-ATP pyrophosphatase of Pyrobaculum islandicum (strain DSM 4184 / JCM 9189 / GEO3).